Here is a 161-residue protein sequence, read N- to C-terminus: Nucleotide-binding protein lpg1167 (161 aa).

It belongs to the YajQ family.

In terms of biological role, nucleotide-binding protein. This chain is Nucleotide-binding protein lpg1167, found in Legionella pneumophila subsp. pneumophila (strain Philadelphia 1 / ATCC 33152 / DSM 7513).